Here is a 401-residue protein sequence, read N- to C-terminus: L-rhamnonate dehydratase (401 aa).

Positions 29 and 55 each coordinate substrate. Residues D222, E248, and E276 each coordinate Mg(2+). The Proton acceptor role is filled by H325. Position 345 (E345) interacts with substrate.

It belongs to the mandelate racemase/muconate lactonizing enzyme family. RhamD subfamily. In terms of assembly, homooctamer; tetramer of dimers. It depends on Mg(2+) as a cofactor.

It carries out the reaction L-rhamnonate = 2-dehydro-3-deoxy-L-rhamnonate + H2O. In terms of biological role, catalyzes the dehydration of L-rhamnonate to 2-keto-3-deoxy-L-rhamnonate (KDR). The sequence is that of L-rhamnonate dehydratase from Salmonella heidelberg (strain SL476).